We begin with the raw amino-acid sequence, 540 residues long: Chaperonin GroEL (540 aa).

ATP is bound by residues 29–32, 86–90, glycine 413, 476–478, and aspartate 492; these read TIGP, DGTTT, and NAA.

Belongs to the chaperonin (HSP60) family. As to quaternary structure, forms a cylinder of 14 subunits composed of two heptameric rings stacked back-to-back. Interacts with the co-chaperonin GroES.

Its subcellular location is the cytoplasm. The enzyme catalyses ATP + H2O + a folded polypeptide = ADP + phosphate + an unfolded polypeptide.. Its function is as follows. Together with its co-chaperonin GroES, plays an essential role in assisting protein folding. The GroEL-GroES system forms a nano-cage that allows encapsulation of the non-native substrate proteins and provides a physical environment optimized to promote and accelerate protein folding. The protein is Chaperonin GroEL of Staphylococcus carnosus (strain TM300).